Here is a 438-residue protein sequence, read N- to C-terminus: Envelope glycoprotein M (438 aa).

Residues 1–13 (MAGSAQPAAVHWR) lie on the Intravirion side of the membrane. Residues 14–34 (LWLAQVGVFAGLALLLLITLI) form a helical membrane-spanning segment. Residues 35 to 88 (GAASPGAGLPCFYAAIVNYNARNLSADGGAWAQRELGARHPALFLETPTTAAFS) lie on the Virion surface side of the membrane. The chain crosses the membrane as a helical span at residues 89 to 109 (AYTAVVLLAVAAFDVAAAIII). The Intravirion portion of the chain corresponds to 110-132 (RRENSGGFAAAYHMNALATLATP). A helical membrane pass occupies residues 133–153 (PGALLLGALAAWTLQAAVLLL). The Virion surface segment spans residues 154 to 158 (SHKIM). The helical transmembrane segment at 159–179 (VLAAATYLAHLAPPAAFVGLF) threads the bilayer. At 180–212 (CTAGLPGAEYAQAVHALRERSPRAHRLLGPGRA) the chain is on the intravirion side. The helical transmembrane segment at 213-233 (VMINLAGGLLALIIGTAPLML) threads the bilayer. Residues 234–248 (GQLLGAGLGLSLAQT) lie on the Virion surface side of the membrane. The helical transmembrane segment at 249–269 (VVAGVTVFCLAAVLFLVLTEL) threads the bilayer. Residues 270 to 276 (VLSRYTQ) lie on the Intravirion side of the membrane. Residues 277–297 (VLPGPAFGTLVAASCIAVASH) traverse the membrane as a helical segment. The Virion surface portion of the chain corresponds to 298–317 (DYFHQLRGVVRTQAPRAAAR). The chain crosses the membrane as a helical span at residues 318–338 (VKLALAGVALLAVAMLVLRLV). Topologically, residues 339–438 (RACLHHRRKG…PRSPPPAHVK (100 aa)) are intravirion. Positions 395–438 (EEAVYEAHAPPRPPTIPLRRPEVPHSRASHPRPPPRSPPPAHVK) are disordered. A compositionally biased stretch (pro residues) spans 425–438 (PRPPPRSPPPAHVK).

The protein belongs to the herpesviridae glycoprotein M family. Interacts (via N-terminus) with gN (via N-terminus). The gM-gN heterodimer forms the gCII complex. In terms of processing, N-glycosylated. It is not O-glycosylated.

It is found in the virion membrane. It localises to the host Golgi apparatus. The protein localises to the host trans-Golgi network. Its subcellular location is the host endosome membrane. The protein resides in the host nucleus inner membrane. In terms of biological role, envelope glycoprotein important for virion assembly and egress. Plays a role in the correct incorporation of gH-gL into virion membrane. Directs the glycoprotein N (gN) to the host trans-Golgi network. The chain is Envelope glycoprotein M from Bovine herpesvirus 1.1 (strain Cooper) (BoHV-1).